The chain runs to 738 residues: Catalase-peroxidase (738 aa).

Over residues 1–13 (MDGQDIGAGGGCP) the composition is skewed to gly residues. The segment at 1–26 (MDGQDIGAGGGCPFSGANTNKGRRSN) is disordered. The segment at residues 98-226 (WHSAGTYRTA…LAAVQMGLIY (129 aa)) is a cross-link (tryptophyl-tyrosyl-methioninium (Trp-Tyr) (with M-252)). Residue His99 is the Proton acceptor of the active site. Residues 226-252 (YVNPEGPDGNPDPIASGRDIRETFARM) constitute a cross-link (tryptophyl-tyrosyl-methioninium (Tyr-Met) (with W-98)). Heme b is bound at residue His267.

The protein belongs to the peroxidase family. Peroxidase/catalase subfamily. As to quaternary structure, homodimer or homotetramer. Heme b serves as cofactor. In terms of processing, formation of the three residue Trp-Tyr-Met cross-link is important for the catalase, but not the peroxidase activity of the enzyme.

The enzyme catalyses H2O2 + AH2 = A + 2 H2O. The catalysed reaction is 2 H2O2 = O2 + 2 H2O. Its function is as follows. Bifunctional enzyme with both catalase and broad-spectrum peroxidase activity. The polypeptide is Catalase-peroxidase (Ruegeria sp. (strain TM1040) (Silicibacter sp.)).